Here is a 536-residue protein sequence, read N- to C-terminus: SNW domain-containing protein 1 (536 aa).

The interval 1 to 46 (MALTSFLPAPTQLSQDQLEAEEKARSQRSRQTSLVSSRREPPPYGY) is disordered. Alanine 2 is modified (N-acetylalanine). The residue at position 14 (serine 14) is a Phosphoserine. A Glycyl lysine isopeptide (Lys-Gly) (interchain with G-Cter in SUMO2) cross-link involves residue lysine 23. Residues 59–79 (GDGGAFPEIHVAQYPLDMGRK) are interaction with PPIL1. Glycyl lysine isopeptide (Lys-Gly) (interchain with G-Cter in SUMO2) cross-links involve residues lysine 81, lysine 97, lysine 115, lysine 122, lysine 141, lysine 158, and lysine 170. An SNW region spans residues 174–339 (AQYIRYTPSQ…KARERRAGIK (166 aa)). Phosphoserine occurs at positions 182 and 190. Residue lysine 193 forms a Glycyl lysine isopeptide (Lys-Gly) (interchain with G-Cter in SUMO2) linkage. Positions 209–233 (PPRFKINKKIPRGPPSPPAPVMHSP) are disordered. 3 positions are modified to phosphoserine: serine 224, serine 232, and serine 234. Glycyl lysine isopeptide (Lys-Gly) (interchain with G-Cter in SUMO2) cross-links involve residues lysine 240, lysine 258, lysine 286, lysine 339, lysine 344, lysine 416, lysine 441, and lysine 452. Positions 311-386 (KMAQKEKEKH…RSKLQRNENR (76 aa)) are disordered. Composition is skewed to basic and acidic residues over residues 472-489 (FVPD…RGRE) and 503-530 (KFLE…EHEG). A disordered region spans residues 472 to 536 (FVPDKEFSGS…EHEGKKRRKE (65 aa)). Residues serine 479 and serine 481 each carry the phosphoserine modification. Lysine 509 participates in a covalent cross-link: Glycyl lysine isopeptide (Lys-Gly) (interchain with G-Cter in SUMO2).

This sequence belongs to the SNW family. Identified in the spliceosome C complex. Associates with U4/U6-U5 tri-small nuclear ribonucleoproteins (U4/U6-U5 tri-snRNPs). Component of the minor spliceosome, which splices U12-type introns. Interacts with SKI, SMAD2,SMAD3, RBPJ, RB1, PABPN1, MAGEA1, SIRT1, FOXN3, U2AF2, PPIL1, DAXX and ATP1B4. Interacts with VDR and RXRA; preferentially associates with VDR:RXRA heterodimers. Interacts with NCOR2. Interacts with MAML1. Interacts with NOTCH1 NICD; the interaction involves multimerized NOTCH1 NICD. Forms a complex with NOTCH1 NICD and MAML1; the association is dissociated by RBPJ. Associates with positive transcription elongation factor b (P-TEFb). Component of the SNARP complex which consists at least of SNIP1, SNW1, THRAP3, BCLAF1 and PNN.

The protein resides in the nucleus. In terms of biological role, involved in pre-mRNA splicing as component of the spliceosome. As a component of the minor spliceosome, involved in the splicing of U12-type introns in pre-mRNAs. Required in the specific splicing of CDKN1A pre-mRNA; the function probably involves the recruitment of U2AF2 to the mRNA. May recruit PPIL1 to the spliceosome. May be involved in cyclin-D1/CCND1 mRNA stability through the SNARP complex which associates with both the 3'end of the CCND1 gene and its mRNA. Involved in transcriptional regulation. Modulates TGF-beta-mediated transcription via association with SMAD proteins, MYOD1-mediated transcription via association with PABPN1, RB1-mediated transcriptional repression, and retinoid-X receptor (RXR)- and vitamin D receptor (VDR)-dependent gene transcription in a cell line-specific manner probably involving coactivators NCOA1 and GRIP1. Is involved in NOTCH1-mediated transcriptional activation. Binds to multimerized forms of Notch intracellular domain (NICD) and is proposed to recruit transcriptional coactivators such as MAML1 to form an intermediate preactivation complex which associates with DNA-bound CBF-1/RBPJ to form a transcriptional activation complex by releasing SNW1 and redundant NOTCH1 NICD. In Bos taurus (Bovine), this protein is SNW domain-containing protein 1 (SNW1).